Here is a 141-residue protein sequence, read N- to C-terminus: MAKKVIANIKLQIKAGKATPSPPIGPALGQHGVNIMEFCKAYNALTQSQEGMVIPVVITVYADRSFSFVTKTPPAAVLLKQAAKIAKGAGDPKRDKVGTVSAAQVREIADLKYKDLNAVNIEGAIKIIEGTARSMGIEISG.

The protein belongs to the universal ribosomal protein uL11 family. In terms of assembly, part of the ribosomal stalk of the 50S ribosomal subunit. Interacts with L10 and the large rRNA to form the base of the stalk. L10 forms an elongated spine to which L12 dimers bind in a sequential fashion forming a multimeric L10(L12)X complex. Post-translationally, one or more lysine residues are methylated.

Functionally, forms part of the ribosomal stalk which helps the ribosome interact with GTP-bound translation factors. This chain is Large ribosomal subunit protein uL11, found in Syntrophus aciditrophicus (strain SB).